The chain runs to 343 residues: Ribosomal RNA small subunit methyltransferase C (343 aa).

This sequence belongs to the methyltransferase superfamily. RsmC family. In terms of assembly, monomer.

It localises to the cytoplasm. It carries out the reaction guanosine(1207) in 16S rRNA + S-adenosyl-L-methionine = N(2)-methylguanosine(1207) in 16S rRNA + S-adenosyl-L-homocysteine + H(+). Functionally, specifically methylates the guanine in position 1207 of 16S rRNA in the 30S particle. The polypeptide is Ribosomal RNA small subunit methyltransferase C (Escherichia coli O1:K1 / APEC).